The sequence spans 1330 residues: Nephrocystin-3 (1330 aa).

Glycine 2 is lipidated: N-myristoyl glycine. A coiled-coil region spans residues 83–207 (ELEYAAAEYE…QRLQAQGIQV (125 aa)). 11 TPR repeats span residues 471 to 504 (IPEEDDFGDVLWDIHDEQEQMETFQQASNSAHEL), 885 to 918 (CLLNLFVSQNLYKRGHFAELLSYWQFVGKDKSAM), 920 to 942 (TEYFDSLKQYEKNCEGEDNMSCL), 943 to 976 (ADLYETLGRFLKDLGLLSQAIVPLQRSLEIRETA), 985 to 1018 (AQSLHQLASVYVQWKKFGNAEQLYKQALEISENA), 1027 to 1060 (ARELEALATLYQKQNKYEQAEHFRKKSFKIHQKA), 1093 to 1126 (ARTLNELGVLYYLQNNLETADQFLKRSLEMRERV), 1135 to 1168 (AQSLNNLAALCNEKKQYDKAEELYERALDIRRRA), 1177 to 1210 (AYTVKHLAILYKKMGKLDKAVPLYELAVEIRQKS), 1219 to 1252 (ATALVNLAVLYSQMKKHVEALPLYERALKIYEDS), and 1261 to 1294 (GETLKNLAVLSYEGGDFEKAAELYKRAMEIKEAE). Positions 1296–1330 (SLLGGKAPSRHSSSGDTFSLKTAHSPNVFLQQGQR) are disordered. Over residues 1305 to 1330 (RHSSSGDTFSLKTAHSPNVFLQQGQR) the composition is skewed to polar residues.

Interacts with NPHP1 and INVS/NPHP2. Interacts (when myristoylated) with UNC119 and UNC119B; interaction is required for localization to cilium. Interacts with CEP164. Component of a complex containing at least ANKS6, INVS, NEK8 and NPHP3. ANKS6 may organize complex assembly by linking INVS and NPHP3 to NEK8 and INVS may target the complex to the proximal ciliary axoneme. Widely expressed at low level. Expressed in heart, placenta, liver, skeletal muscle, kidney and pancreas. Expressed at very low level in brain and lung.

It is found in the cell projection. The protein resides in the cilium. In terms of biological role, required for normal ciliary development and function. Inhibits disheveled-1-induced canonical Wnt-signaling activity and may also play a role in the control of non-canonical Wnt signaling which regulates planar cell polarity. Probably acts as a molecular switch between different Wnt signaling pathways. Required for proper convergent extension cell movements. The sequence is that of Nephrocystin-3 (NPHP3) from Homo sapiens (Human).